Reading from the N-terminus, the 595-residue chain is Peptidyl-prolyl cis-trans isomerase CYP65 (595 aa).

In terms of domain architecture, U-box spans 35–108 (KSLPYYCCAL…GEYHCPVLNK (74 aa)). One can recognise a PPIase cyclophilin-type domain in the interval 342-496 (KKGYVQFQTT…EEIKIIEASV (155 aa)). Disordered regions lie at residues 503 to 546 (ELDE…GGGG) and 576 to 595 (SKKR…FSSW). Over residues 510–525 (KEKAEKEKNEDKDIEK) the composition is skewed to basic and acidic residues. The span at 582 to 595 (TASASTGFKDFSSW) shows a compositional bias: polar residues.

Belongs to the cyclophilin-type PPIase family. PPIL2 subfamily. As to expression, expressed in leaves, flower buds and stems. Lower levels of expression in roots.

The protein localises to the nucleus. The catalysed reaction is [protein]-peptidylproline (omega=180) = [protein]-peptidylproline (omega=0). The enzyme catalyses S-ubiquitinyl-[E2 ubiquitin-conjugating enzyme]-L-cysteine + [acceptor protein]-L-lysine = [E2 ubiquitin-conjugating enzyme]-L-cysteine + N(6)-ubiquitinyl-[acceptor protein]-L-lysine.. It participates in protein modification; protein ubiquitination. In terms of biological role, may catalyze the cis-trans isomerization of proline imidic peptide bonds in oligopeptides thereby assisting the folding of proteins. May also function as a chaperone, playing a role in intracellular transport of proteins. May also have a protein ubiquitin ligase activity acting as an E3 ubiquitin protein ligase or as a ubiquitin-ubiquitin ligase promoting elongation of ubiquitin chains on proteins. This is Peptidyl-prolyl cis-trans isomerase CYP65 (CYP65) from Arabidopsis thaliana (Mouse-ear cress).